We begin with the raw amino-acid sequence, 87 residues long: UPF0250 protein PC1_1177 (87 aa).

This sequence belongs to the UPF0250 family.

The protein is UPF0250 protein PC1_1177 of Pectobacterium carotovorum subsp. carotovorum (strain PC1).